A 307-amino-acid polypeptide reads, in one-letter code: UDP-N-acetylenolpyruvoylglucosamine reductase (307 aa).

Residues threonine 33–glycine 197 enclose the FAD-binding PCMH-type domain. Arginine 176 is an active-site residue. The active-site Proton donor is serine 226. Glutamate 296 is a catalytic residue.

This sequence belongs to the MurB family. Requires FAD as cofactor.

The protein resides in the cytoplasm. It carries out the reaction UDP-N-acetyl-alpha-D-muramate + NADP(+) = UDP-N-acetyl-3-O-(1-carboxyvinyl)-alpha-D-glucosamine + NADPH + H(+). It participates in cell wall biogenesis; peptidoglycan biosynthesis. Functionally, cell wall formation. This chain is UDP-N-acetylenolpyruvoylglucosamine reductase, found in Staphylococcus aureus (strain COL).